A 262-amino-acid chain; its full sequence is 27 kDa lipoprotein antigen (262 aa).

The first 28 residues, 1 to 28 (MSASCAVPRLTRFAVFAVAGATALSLSA), serve as a signal peptide directing secretion. 2 stretches are compositionally biased toward low complexity: residues 28–57 (ACGSSNKSSSTSTSTSTSTSTVTSAAPSST) and 148–158 (STPGGASSTPP). 2 disordered regions span residues 28-60 (ACGSSNKSSSTSTSTSTSTSTVTSAAPSSTPNA) and 138-171 (VNGTCPKPHESTPGGASSTPPSGSPSPAPAKPAW). A lipid anchor (N-palmitoyl cysteine) is attached at C29. The S-diacylglycerol cysteine moiety is linked to residue C29.

The protein localises to the cell membrane. The protein is 27 kDa lipoprotein antigen (Mi43) of Mycobacterium intracellulare.